Consider the following 762-residue polypeptide: Chondroadherin-like protein (762 aa).

The signal sequence occupies residues M1 to A30. In terms of domain architecture, LRRNT 1 spans Q31–E62. Residue N52 is glycosylated (N-linked (GlcNAc...) asparagine). LRR repeat units lie at residues H87 to G108, R111 to G132, S135 to A156, A159 to G180, R183 to G204, A207 to Q228, G231 to A252, G255 to H276, and R279 to G300. Residues N310–G359 form the LRRCT 1 domain. The tract at residues E364–E390 is disordered. A compositionally biased stretch (pro residues) spans R377–G386. Residues P387–S425 enclose the LRRNT 2 domain. An intrachain disulfide couples C396 to C411. 10 LRR repeats span residues D426–G447, H450–G471, R474–G495, R498–A519, S522–R543, A546–G566, E570–G591, A594–P615, S619–G640, and G644–S665. N626 carries N-linked (GlcNAc...) asparagine glycosylation. The LRRCT 2 domain occupies N675 to G724. 2 cysteine pairs are disulfide-bonded: C679–C722 and C681–C701. Residues R728–I745 show a composition bias toward basic residues. The interval R728–L762 is disordered.

Belongs to the small leucine-rich proteoglycan (SLRP) family. SLRP class IV subfamily. Associates with collagen and binds to collagen fibrils.

The protein resides in the secreted. It is found in the extracellular space. It localises to the extracellular matrix. Potential negative modulator of chondrocyte differentiation. Inhibits collagen fibrillogenesis in vitro. May influence chondrocyte's differentiation by acting on its cellular collagenous microenvironment. The protein is Chondroadherin-like protein (CHADL) of Homo sapiens (Human).